A 528-amino-acid chain; its full sequence is Inositol-3-phosphate synthase (528 aa).

NAD(+) is bound by residues Gly-66, Gly-67, Asn-68, Asn-69, Asp-140, Gln-187, Arg-190, Thr-228, Ala-229, Asn-230, Thr-231, Gly-279, Asp-304, Ser-307, Asn-338, Asn-339, Asp-340, Lys-353, Gly-392, Asp-393, Asp-421, and Ser-422.

The protein belongs to the myo-inositol 1-phosphate synthase family. The cofactor is NAD(+).

It is found in the cytoplasm. The protein resides in the cytosol. The catalysed reaction is D-glucose 6-phosphate = 1D-myo-inositol 3-phosphate. It functions in the pathway polyol metabolism; myo-inositol biosynthesis; myo-inositol from D-glucose 6-phosphate: step 1/2. Activated by ammonium ions. Its function is as follows. Key enzyme in myo-inositol biosynthesis pathway that catalyzes the conversion of glucose 6-phosphate to 1-myo-inositol 1-phosphate in a NAD-dependent manner. Rate-limiting enzyme in the synthesis of all inositol-containing compounds. De novo-synthesized myo-inositol is essential for incorporation into GPI (glycosylphosphatidylinositol) glycolipids in the bloodstream form. The protein is Inositol-3-phosphate synthase of Trypanosoma brucei brucei.